We begin with the raw amino-acid sequence, 394 residues long: MSYPAFDSKTFLEAHIEKTMAFYFPTCIDPEGGFFQFFKDDGSVYDPNTRHLVSSTRFIFNFAQAYLHTNIAEYKHAAVHGIQYLRQRHQSQSGGYVWLLDGGTNLDETNHCYGLAFVILAYSNALQIGLSEAEVWIEVTYDLLETHFWENKHGLYLDEISSDWKTVSPYRGQNANMHMCEALMSAFDATQNPKYLDRAKLLAKNICQKQASLSNSNEVWEHYTNDWQIDWDYNKNDPKHLFRPWGFQPGHQTEWAKLLLMLDKRSPENWYLPKAKYLFDLAYKKAWDTKKGGLHYGYAPDGTVCDPDKYFWVQAESFAAAWLLYKATKDETYYKQYLTLWEFSWNHMIDHTFGAWYRILDENNAQYDNNKSPAGKTDYHTMGACYEVLKTLTL.

Catalysis depends on proton donor/acceptor residues His251 and His380.

Belongs to the N-acylglucosamine 2-epimerase family. In terms of assembly, monomer.

The catalysed reaction is D-mannose = D-fructose. It catalyses the reaction D-lyxose = D-xylulose. Its function is as follows. Catalyzes the reversible isomerization of D-mannose to D-fructose. Can also isomerize D-lyxose, with lower efficiency. In longer reaction with a higher concentration of enzyme, it can isomerize 4-OH D-mannose derivatives (D-talose and 4-O-monosaccharyl-D-mannose). Cannot use D-glucose. This is D-mannose isomerase from Marinomonas mediterranea (strain ATCC 700492 / JCM 21426 / NBRC 103028 / MMB-1).